Here is a 207-residue protein sequence, read N- to C-terminus: Proteasome subunit beta 2 (207 aa).

Residues 1-13 (METNNKLKILKTG) constitute a propeptide, removed in mature form; by autocatalysis. The active-site Nucleophile is the Thr-14.

Belongs to the peptidase T1B family. The 20S proteasome core is composed of 14 alpha and 14 beta subunits that assemble into four stacked heptameric rings, resulting in a barrel-shaped structure. The two inner rings, each composed of seven catalytic beta subunits, are sandwiched by two outer rings, each composed of seven alpha subunits. The catalytic chamber with the active sites is on the inside of the barrel. Has a gated structure, the ends of the cylinder being occluded by the N-termini of the alpha-subunits. Is capped at one or both ends by the proteasome regulatory ATPase, PAN.

The protein localises to the cytoplasm. The catalysed reaction is Cleavage of peptide bonds with very broad specificity.. Its activity is regulated as follows. The formation of the proteasomal ATPase PAN-20S proteasome complex, via the docking of the C-termini of PAN into the intersubunit pockets in the alpha-rings, triggers opening of the gate for substrate entry. Interconversion between the open-gate and close-gate conformations leads to a dynamic regulation of the 20S proteasome proteolysis activity. Its function is as follows. Component of the proteasome core, a large protease complex with broad specificity involved in protein degradation. The protein is Proteasome subunit beta 2 of Sulfurisphaera tokodaii (strain DSM 16993 / JCM 10545 / NBRC 100140 / 7) (Sulfolobus tokodaii).